We begin with the raw amino-acid sequence, 441 residues long: MGRKKIQITRIMDERNRQVTFTKRKFGLMKKAYELSVLCDCEIALIIFNSTNKLFQYASTDMDKVLLKYTEYNEPHESRTNSDIVETLRKKGLNGCDSPDPDADDSVGHSPESEDKYRKINEDIDLMISRQRLCAVPPPNFEMPVSIPVSSHNSLVYSNPVSSLGNPNLLPLAHPSLQRNSMSPGVTHRPPSAGNTGGLMGGDLTSGAGTSAGNGYGNPRNSPGLLVSPGNLNKNMQAKSPPPMNLGMNNRKPDLRVLIPPGSKNTMPSVSEDVDLLLNQRINNSQSAQSLATPVVSVATPTLPGQGMGGYPSAISTTYGTEYSLSSADLSSLSGFNTASALHLGSVTGWQQQHLHSMPPSALSQLGDRTTTPSRYPQHTRHEAGRSPVDSLSSCSSSYDGSDREDHRNEFHSPIGLTRPSPDERESPSVKRMRLSEGWAT.

Residues 1-61 form the MADS-box domain; the sequence is MGRKKIQITR…NKLFQYASTD (61 aa). N6-acetyllysine is present on Lys4. A DNA-binding region (mef2-type) is located at residues 58 to 86; it reads ASTDMDKVLLKYTEYNEPHESRTNSDIVE. The residue at position 59 (Ser59) is a Phosphoserine; by CK2. Residues 91–116 form a disordered region; the sequence is KGLNGCDSPDPDADDSVGHSPESEDK. 3 positions are modified to phosphoserine: Ser98, Ser106, and Ser110. N6-acetyllysine occurs at positions 116 and 119. The segment at 180 to 224 is disordered; the sequence is NSMSPGVTHRPPSAGNTGGLMGGDLTSGAGTSAGNGYGNPRNSPG. A phosphoserine mark is found at Ser222 and Ser228. Residues Lys234 and Lys239 each carry the N6-acetyllysine modification. Ser240 carries the phosphoserine modification. N6-acetyllysine occurs at positions 252 and 264. A beta domain region spans residues 271–278; the sequence is SEDVDLLL. Phosphothreonine; by MAPK7 and MAPK14 occurs at positions 293 and 300. The tract at residues 353–441 is disordered; sequence QHLHSMPPSA…RMRLSEGWAT (89 aa). Polar residues predominate over residues 362–377; the sequence is ALSQLGDRTTTPSRYP. Ser387 carries the phosphoserine; by MAPK7 modification. Residues 387–400 show a composition bias toward low complexity; sequence SPVDSLSSCSSSYD. Basic and acidic residues predominate over residues 401-411; that stretch reads GSDREDHRNEF. Phosphoserine is present on Ser413.

This sequence belongs to the MEF2 family. As to quaternary structure, forms a complex with class II HDACs in undifferentiating cells. On myogenic differentiation, HDACs are released into the cytoplasm allowing MEF2s to interact with other proteins for activation. Interacts with EP300 in differentiating cells; the interaction acetylates MEF2C leading to increased DNA binding and activation. Interacts with HDAC7 and CARM1. Interacts with HDAC4, HDAC7 and HDAC9; the interaction with HDACs represses transcriptional activity. Interacts with LPIN1. Interacts with MYOCD. Interacts with AKAP13. Interacts with FOXK1; the interaction inhibits MEF2C transactivation activity. Interacts (via N-terminus) with HABP4; this interaction decreases DNA-binding activity of MEF2C in myocardial cells in response to mechanical stress. Interacts with JPH2; interaction specifically takes place with the Junctophilin-2 N-terminal fragment cleavage product of JPH2. Interacts (via MADS box) with SOX18. Interacts with PHF7; the interaction promotes MEF2C binding to its transcription targets. Post-translationally, phosphorylation on Ser-59 enhances DNA binding activity. In terms of processing, acetylated by p300 on several sites in diffentiating myocytes. Acetylation on Lys-4 increases DNA binding and transactivation. Proteolytically cleaved in cerebellar granule neurons, probably by caspase 7, following neurotoxicity.

The protein localises to the nucleus. Its subcellular location is the cytoplasm. It localises to the sarcoplasm. Transcription activator which binds specifically to the MEF2 element present in the regulatory regions of many muscle-specific genes. Controls cardiac morphogenesis and myogenesis, and is also involved in vascular development. Enhances transcriptional activation mediated by SOX18. Plays an essential role in hippocampal-dependent learning and memory by suppressing the number of excitatory synapses and thus regulating basal and evoked synaptic transmission. Crucial for normal neuronal development, distribution, and electrical activity in the neocortex. Necessary for proper development of megakaryocytes and platelets and for bone marrow B-lymphopoiesis. Required for B-cell survival and proliferation in response to BCR stimulation, efficient IgG1 antibody responses to T-cell-dependent antigens and for normal induction of germinal center B-cells. May also be involved in neurogenesis and in the development of cortical architecture. The sequence is that of Myocyte-specific enhancer factor 2C from Bos taurus (Bovine).